A 529-amino-acid polypeptide reads, in one-letter code: Cytochrome P450 monooxygenase patI (529 aa).

At 1–8 (MDFTQVPP) the chain is on the cytoplasmic side. The chain crosses the membrane as a helical span at residues 9 to 25 (SYILGVLLSSTSILFCL). Residues 26 to 529 (KYLLRSGYRP…EAQGVFSRFD (504 aa)) lie on the Lumenal side of the membrane. N-linked (GlcNAc...) asparagine glycans are attached at residues Asn81 and Asn383. Residue Cys449 coordinates heme.

This sequence belongs to the cytochrome P450 family. Requires heme as cofactor.

Its subcellular location is the endoplasmic reticulum membrane. It catalyses the reaction 3-hydroxybenzyl alcohol + reduced [NADPH--hemoprotein reductase] + O2 = gentisyl alcohol + oxidized [NADPH--hemoprotein reductase] + H2O + H(+). It participates in mycotoxin biosynthesis; patulin biosynthesis. In terms of biological role, cytochrome P450 monooxygenase; part of the gene cluster that mediates the biosynthesis of patulin, an acetate-derived tetraketide mycotoxin produced by several fungal species that shows antimicrobial properties against several bacteria. PatI catalyzes the conversion of m-hydroxybenzyl alcohol into gentisyl alcohol. The pathway begins with the synthesis of 6-methylsalicylic acid by the polyketide synthase (PKS) patK via condensation of acetate and malonate units. The 6-methylsalicylic acid decarboxylase patG then catalyzes the decarboxylation of 6-methylsalicylic acid to yield m-cresol (also known as 3-methylphenol). These first reactions occur in the cytosol. The intermediate m-cresol is then transported into the endoplasmic reticulum where the cytochrome P450 monooxygenase patH converts it to m-hydroxybenzyl alcohol, which is further converted to gentisyl alcohol by the cytochrome P450 monooxygenase patI. The oxidoreductases patJ and patO further convert gentisyl alcohol to isoepoxydon in the vacuole. PatN catalyzes then the transformation of isoepoxydon into phyllostine. The cluster protein patF is responsible for the conversion from phyllostine to neopatulin whereas the alcohol dehydrogenase patD converts neopatulin to E-ascladiol. The steps between isoepoxydon and E-ascladiol occur in the cytosol, and E-ascladiol is probably secreted to the extracellular space by one of the cluster-specific transporters patC or patM. Finally, the secreted patulin synthase patE catalyzes the conversion of E-ascladiol to patulin. The chain is Cytochrome P450 monooxygenase patI from Aspergillus clavatus (strain ATCC 1007 / CBS 513.65 / DSM 816 / NCTC 3887 / NRRL 1 / QM 1276 / 107).